The chain runs to 237 residues: Splicing factor U2AF 35 kDa subunit (237 aa).

Residue Ala-2 is modified to N-acetylalanine. The segment at 12 to 40 (EKDKVNCSFYFKIGACRHGDRCSRLHNKP) adopts a C3H1-type 1 zinc-finger fold. The residue at position 39 (Lys-39) is an N6-methyllysine. A phosphoserine mark is found at Ser-61 and Ser-145. One can recognise an RRM domain in the interval 65–147 (LRCAVSDVEM…QPIHAELSPV (83 aa)). The C3H1-type 2 zinc finger occupies 149–176 (DFREACCRQYEMGECTRGGFCNFMHLKP). Residue Arg-165 is modified to Omega-N-methylarginine. The disordered stretch occupies residues 185 to 237 (LYGRRRKKHRSRSRSRERRSRSRDRGRGGGGGGGGGRERDRRRSRDRERSGRF). Basic residues predominate over residues 188–208 (RRRKKHRSRSRSRERRSRSRD). A compositionally biased stretch (basic and acidic residues) spans 220 to 237 (GRERDRRRSRDRERSGRF).

Belongs to the splicing factor SR family. As to quaternary structure, identified in the spliceosome C complex. Heterodimer with U2AF2. Interacts (via RS domain) with PHF5A (via N-terminus). Interacts with ZRANB2. Interacts with SDE2. Interacts with SF3B1.

The protein localises to the nucleus. It is found in the nucleus speckle. Its function is as follows. Plays a critical role in both constitutive and enhancer-dependent splicing by mediating protein-protein interactions and protein-RNA interactions required for accurate 3'-splice site selection. Recruits U2 snRNP to the branch point. Directly mediates interactions between U2AF2 and proteins bound to the enhancers and thus may function as a bridge between U2AF2 and the enhancer complex to recruit it to the adjacent intron. This chain is Splicing factor U2AF 35 kDa subunit (U2AF1), found in Bos taurus (Bovine).